The chain runs to 156 residues: Peroxisomal membrane associated protein 20 (156 aa).

Positions 2-156 (VAVGSTLPKV…SSADKVLSSL (155 aa)) constitute a Thioredoxin domain. The Cysteine sulfenic acid (-SOH) intermediate role is filled by cysteine 43.

Belongs to the peroxiredoxin family. Prx5 subfamily. As to quaternary structure, homodimer; disulfide-linked, upon oxidation.

It is found in the cytoplasm. Its subcellular location is the nucleus. May act as a chaperone rather than a peroxidase. Has no thioredoxin-dependent peroxidase activity. Shows weak chaperone activity. In Schizosaccharomyces pombe (strain 972 / ATCC 24843) (Fission yeast), this protein is Peroxisomal membrane associated protein 20.